The following is a 372-amino-acid chain: Prostaglandin E synthase 2 (372 aa).

Topologically, residues 1–54 are lumenal; the sequence is MAHAVRALWPHGRALAWRLGDRPALGLHAQSRAGFTGAAGGSGPAATARKGGPR. A helical transmembrane segment spans residues 55–71; sequence LLGAAALALGGALGLYH. Over 72–372 the chain is Cytoplasmic; that stretch reads TARWHLRAQD…VEKAIAEAPQ (301 aa). The region spanning 87-190 is the Glutaredoxin domain; that stretch reads SATQLSLSSR…DIITYYPPMK (104 aa). Ser92 bears the Phosphoserine mark. Residues Val145 and 161-162 contribute to the glutathione site; that span reads DS. The 114-residue stretch at 259–372 folds into the GST C-terminal domain; the sequence is DYIVKEGNFG…VEKAIAEAPQ (114 aa).

It belongs to the GST superfamily. As to quaternary structure, may interact with CEBPB. Interacts with EXOSC10. Homodimer. Post-translationally, synthesized as a Golgi membrane-associated protein, and the proteolytic removal of the N-terminal hydrophobic domain leads to the formation of a mature cytosolic enzyme. Detected in heart (at protein level). Widely expressed. Expressed in heart &gt; kidney &gt; muscle &gt; testis &gt; endometrium = ovary &gt; myometrium = spleen = lung. In endometrium, it is mainly expressed in luminal epithelial cells followed by glandular epithelial cells, but expression is also present in stromal cells at a lower level.

It localises to the microsome membrane. It is found in the cytoplasm. The catalysed reaction is prostaglandin H2 = prostaglandin E2. It carries out the reaction prostaglandin H2 = (12S)-hydroxy-(5Z,8E,10E)-heptadecatrienoate + malonaldehyde. Its pathway is lipid metabolism; prostaglandin biosynthesis. With respect to regulation, isomerase activity is increased by sulfhydril compounds. Dithiothreitol (DTT) is most effective, followed by glutathione (GSH) and 2-mercaptoethanol. Functionally, isomerase that catalyzes the conversion of PGH2 into the more stable prostaglandin E2 (PGE2) (in vitro). The biological function and the GSH-dependent property of PTGES2 is still under debate. In vivo, PTGES2 could form a complex with GSH and heme and would not participate in PGE2 synthesis but would catalyze the degradation of prostaglandin E2 H2 (PGH2) to 12(S)-hydroxy-5(Z),8(E),10(E)-heptadecatrienoic acid (HHT) and malondialdehyde (MDA). This chain is Prostaglandin E synthase 2 (PTGES2), found in Bos taurus (Bovine).